We begin with the raw amino-acid sequence, 877 residues long: Alanine--tRNA ligase (877 aa).

The Zn(2+) site is built by H565, H569, C667, and H671.

The protein belongs to the class-II aminoacyl-tRNA synthetase family. Zn(2+) is required as a cofactor.

It localises to the cytoplasm. It catalyses the reaction tRNA(Ala) + L-alanine + ATP = L-alanyl-tRNA(Ala) + AMP + diphosphate. Its function is as follows. Catalyzes the attachment of alanine to tRNA(Ala) in a two-step reaction: alanine is first activated by ATP to form Ala-AMP and then transferred to the acceptor end of tRNA(Ala). Also edits incorrectly charged Ser-tRNA(Ala) and Gly-tRNA(Ala) via its editing domain. The chain is Alanine--tRNA ligase from Acidithiobacillus ferridurans.